Reading from the N-terminus, the 299-residue chain is Prohibitin-2 (299 aa).

Ala2 bears the N-acetylalanine mark. Residues 19-49 (MGTALKLLLGAGAVAYGVRESVFTVEGGHRA) form a necessary for transcriptional repression region. A Phosphotyrosine modification is found at Tyr128. Residue Lys147 is modified to N6-acetyllysine. A necessary for transcriptional repression region spans residues 150 to 174 (ASQLITQRAQVSLLIRRELTERAKD). Residue Ser151 is modified to Phosphoserine. The stretch at 190 to 238 (SREYTAAVEAKQVAQQEAQRAQFLVEKAKQEQRQKIVQAEGEAEAAKML) forms a coiled coil. N6-acetyllysine is present on residues Lys200, Lys236, Lys250, and Lys262.

Belongs to the prohibitin family. The mitochondrial prohibitin complex consists of two subunits (PHB1 and PHB2), assembled into a membrane-associated ring-shaped supercomplex of approximately 1 mDa. Interacts with ESR1, HDAC1 and HDAC5. Interacts with ZNF703. Interacts with STOML2. Interacts with ARFGEF3. Interacts with SPHK2. Interacts with COX4I1; the interaction associates PHB2 with COX. Interacts with MAP1LC3B (membrane-bound form LC3-II); the interaction is direct and upon mitochondrial depolarization and proteasome-dependent outer membrane rupture. Interacts with IGFBP6 (via C-terminal domain). Interacts with CLPB. Interacts with CD86 (via cytoplasmic domain); the interactions increases after priming with CD40. Interacts with AFG3L2. Interacts with DNAJC19. Interacts with AKT2; this interaction may be important for myogenic differentiation. In terms of processing, phosphorylated. Tyrosine phosphorylation is indirectly stimulated by IGFBP6.

It localises to the mitochondrion inner membrane. It is found in the cytoplasm. Its subcellular location is the nucleus. The protein resides in the cell membrane. Its function is as follows. Protein with pleiotropic attributes mediated in a cell-compartment- and tissue-specific manner, which include the plasma membrane-associated cell signaling functions, mitochondrial chaperone, and transcriptional co-regulator of transcription factors and sex steroid hormones in the nucleus. In terms of biological role, in the mitochondria, together with PHB, forms large ring complexes (prohibitin complexes) in the inner mitochondrial membrane (IMM) and functions as a chaperone protein that stabilizes mitochondrial respiratory enzymes and maintains mitochondrial integrity in the IMM, which is required for mitochondrial morphogenesis, neuronal survival, and normal lifespan. The prohibitin complex, with DNAJC19, regulates cardiolipin remodeling and the protein turnover of OMA1 in a cardiolipin-binding manner. Also regulates cytochrome-c oxidase assembly (COX) and mitochondrial respiration. Binding to sphingoid 1-phosphate (SPP) modulates its regulator activity. Has a key role of mitophagy receptor involved in targeting mitochondria for autophagic degradation. Involved in mitochondrial-mediated antiviral innate immunity, activates RIG-I-mediated signal transduction and production of IFNB1 and pro-inflammatory cytokine IL6. Functionally, in the nucleus, serves as transcriptional co-regulator. Acts as a mediator of transcriptional repression by nuclear hormone receptors via recruitment of histone deacetylases. Functions as an estrogen receptor (ER)-selective coregulator that potentiates the inhibitory activities of antiestrogens and represses the activity of estrogens. Competes with NCOA1 for modulation of ER transcriptional activity. In the plasma membrane, is involved in IGFBP6-induced cell migration. Cooperates with CD86 to mediate CD86-signaling in B lymphocytes that regulates the level of IgG1 produced through the activation of distal signaling intermediates. Upon CD40 engagement, required to activate NF-kappa-B signaling pathway via phospholipase C and protein kinase C activation. This chain is Prohibitin-2 (PHB2), found in Pongo abelii (Sumatran orangutan).